A 251-amino-acid polypeptide reads, in one-letter code: Diphthine synthase (251 aa).

Residues L9, D84, V87, 112-113, L160, A194, and H219 contribute to the S-adenosyl-L-methionine site; that span reads SI.

This sequence belongs to the diphthine synthase family. As to quaternary structure, homodimer.

It carries out the reaction 2-[(3S)-amino-3-carboxypropyl]-L-histidyl-[translation elongation factor 2] + 3 S-adenosyl-L-methionine = diphthine-[translation elongation factor 2] + 3 S-adenosyl-L-homocysteine + 3 H(+). The protein operates within protein modification; peptidyl-diphthamide biosynthesis. In terms of biological role, S-adenosyl-L-methionine-dependent methyltransferase that catalyzes the trimethylation of the amino group of the modified target histidine residue in translation elongation factor 2 (EF-2), to form an intermediate called diphthine. The three successive methylation reactions represent the second step of diphthamide biosynthesis. The polypeptide is Diphthine synthase (Archaeoglobus fulgidus (strain ATCC 49558 / DSM 4304 / JCM 9628 / NBRC 100126 / VC-16)).